The primary structure comprises 592 residues: A-type ATP synthase subunit A (592 aa).

233-240 (GPFGSGKT) is an ATP binding site.

Belongs to the ATPase alpha/beta chains family. In terms of assembly, has multiple subunits with at least A(3), B(3), C, D, E, F, H, I and proteolipid K(x).

Its subcellular location is the cell membrane. It catalyses the reaction ATP + H2O + 4 H(+)(in) = ADP + phosphate + 5 H(+)(out). In terms of biological role, component of the A-type ATP synthase that produces ATP from ADP in the presence of a proton gradient across the membrane. The A chain is the catalytic subunit. The polypeptide is A-type ATP synthase subunit A (Saccharolobus islandicus (strain Y.G.57.14 / Yellowstone #1) (Sulfolobus islandicus)).